A 1164-amino-acid polypeptide reads, in one-letter code: DNA-directed RNA polymerase 133 kDa polypeptide (1164 aa).

It belongs to the RNA polymerase beta chain family. The DNA-dependent RNA polymerase used for intermediate and late genes expression consists of eight subunits 147 kDa, 133 kDa, 35 kDa, 30 kDa, 22 kDa, 19 kDa, 18 kDa and 7 kDa totalling more than 500 kDa in mass. The same holoenzyme, with the addition of the transcription-specificity factor RAP94, is used for early gene expression.

Its subcellular location is the virion. It carries out the reaction RNA(n) + a ribonucleoside 5'-triphosphate = RNA(n+1) + diphosphate. In terms of biological role, part of the DNA-dependent RNA polymerase which catalyzes the transcription of viral DNA into RNA using the four ribonucleoside triphosphates as substrates. Responsible for the transcription of early, intermediate and late genes. DNA-dependent RNA polymerase associates with the early transcription factor (ETF), itself composed of OPG118 and OPG133, thereby allowing the early genes transcription. Late transcription, and probably also intermediate transcription, require newly synthesized RNA polymerase. The polypeptide is DNA-directed RNA polymerase 133 kDa polypeptide (OPG151) (Homo sapiens (Human)).